Here is a 479-residue protein sequence, read N- to C-terminus: PTS system MurNAc-GlcNAc-specific EIIBC component (479 aa).

The 83-residue stretch at 5–87 folds into the PTS EIIB type-1 domain; that stretch reads QILAEHIIDA…SELSGAPLGE (83 aa). The active-site Phosphocysteine intermediate; for EIIB activity is the cysteine 27. The region spanning 125–479 is the PTS EIIC type-1 domain; the sequence is KTIANIFIPL…AMRESDTLGD (355 aa). Helical transmembrane passes span 130–150, 169–189, 195–215, 229–249, 269–289, 303–323, 344–364, 379–399, 403–423, and 445–465; these read IFIPLIPAFIGAGLIGGIAAV, VTVFNVIKDGMLAYLAIFTGI, FGATPGLGGVIGGTTLLTGLT, LQPGQGGIIGVIFAVWLLSII, ITLFIIGLLTIFIFMPLAGFV, IGGVFSGFIIGAFFLPLVMLG, LLPIAAMAGAGQVGAALALWV, ALPVGFLGIGEPLIYGVTLPL, FITACIGGGIGGAVIGGIGHI, and LGYIAGLLVAYAGGFIFTYFF.

The protein resides in the cell membrane. It catalyses the reaction N-acetyl-beta-D-muramate-(1-&gt;4)-N-acetyl-D-glucosamine(out) + N(pros)-phospho-L-histidyl-[protein] = 6-phospho-N-acetyl-beta-D-muramate-(1-&gt;4)-N-acetyl-D-glucosamine(in) + L-histidyl-[protein]. It functions in the pathway cell wall biogenesis; peptidoglycan recycling. In terms of biological role, the phosphoenolpyruvate-dependent sugar phosphotransferase system (sugar PTS), a major carbohydrate active transport system, catalyzes the phosphorylation of incoming sugar substrates concomitantly with their translocation across the cell membrane. This system is involved in the uptake and phosphorylation of MurNAc-GlcNAc, the principle peptidoglycan turnover product of S.aureus, yielding cytoplasmic MurNAc 6P-GlcNAc. The polypeptide is PTS system MurNAc-GlcNAc-specific EIIBC component (Staphylococcus saprophyticus subsp. saprophyticus (strain ATCC 15305 / DSM 20229 / NCIMB 8711 / NCTC 7292 / S-41)).